We begin with the raw amino-acid sequence, 827 residues long: Cadherin-17 (827 aa).

An N-terminal signal peptide occupies residues M1–G21. At Q22–M786 the chain is on the extracellular side. Cadherin domains follow at residues P29–Q127, T128–P243, V244–C339, L340–F448, E449–F565, P566–L666, and A667–G776. N-linked (GlcNAc...) asparagine glycosylation is found at N148, N183, N249, N418, N545, N573, and N721. Residues A787–I807 form a helical membrane-spanning segment. Topologically, residues R808–S827 are cytoplasmic.

Liver and intestine.

The protein localises to the cell membrane. In terms of biological role, cadherins are calcium-dependent cell adhesion proteins. They preferentially interact with themselves in a homophilic manner in connecting cells; cadherins may thus contribute to the sorting of heterogeneous cell types. LI-cadherin may have a role in the morphological organization of liver and intestine. The chain is Cadherin-17 (Cdh17) from Rattus norvegicus (Rat).